Here is an 89-residue protein sequence, read N- to C-terminus: Small ribosomal subunit protein uS15 (89 aa).

This sequence belongs to the universal ribosomal protein uS15 family. In terms of assembly, part of the 30S ribosomal subunit. Forms a bridge to the 50S subunit in the 70S ribosome, contacting the 23S rRNA.

Its function is as follows. One of the primary rRNA binding proteins, it binds directly to 16S rRNA where it helps nucleate assembly of the platform of the 30S subunit by binding and bridging several RNA helices of the 16S rRNA. Functionally, forms an intersubunit bridge (bridge B4) with the 23S rRNA of the 50S subunit in the ribosome. The polypeptide is Small ribosomal subunit protein uS15 (Shewanella sediminis (strain HAW-EB3)).